The primary structure comprises 591 residues: Aspartate--tRNA(Asp/Asn) ligase (591 aa).

L-aspartate is bound at residue Glu170. The segment at 194 to 197 is aspartate; sequence QLFK. Arg216 is a binding site for L-aspartate. Residues 216-218 and Gln225 each bind ATP; that span reads RDE. His448 is a binding site for L-aspartate. Glu482 lines the ATP pocket. Arg489 contacts L-aspartate. 534-537 is an ATP binding site; that stretch reads GWDR. The segment at 559 to 591 is disordered; it reads GGVDPLTDAPAPITEQQRKESGIDVKPEPSKPH. The span at 574–591 shows a compositional bias: basic and acidic residues; sequence QQRKESGIDVKPEPSKPH.

This sequence belongs to the class-II aminoacyl-tRNA synthetase family. Type 1 subfamily. Homodimer.

Its subcellular location is the cytoplasm. The enzyme catalyses tRNA(Asx) + L-aspartate + ATP = L-aspartyl-tRNA(Asx) + AMP + diphosphate. In terms of biological role, aspartyl-tRNA synthetase with relaxed tRNA specificity since it is able to aspartylate not only its cognate tRNA(Asp) but also tRNA(Asn). Reaction proceeds in two steps: L-aspartate is first activated by ATP to form Asp-AMP and then transferred to the acceptor end of tRNA(Asp/Asn). This Mycolicibacterium paratuberculosis (strain ATCC BAA-968 / K-10) (Mycobacterium paratuberculosis) protein is Aspartate--tRNA(Asp/Asn) ligase.